The sequence spans 40 residues: Bacterioferritin heavy chain (40 aa).

Residues 1-40 (MRGNPEVIDYLNMLIGGELAARDQYLIHSRMYEDWGLTKY) enclose the Ferritin-like diiron domain. Fe cation is bound at residue glutamate 18.

Belongs to the bacterioferritin family. In terms of assembly, oligomer consisting of two types of subunits: light chain and heavy chain.

Functionally, may perform analogous functions in iron detoxification and storage to that of animal ferritins. Contains approximately 750 iron atoms per molecule. This is Bacterioferritin heavy chain from Absidia spinosa.